The primary structure comprises 281 residues: Predicted GPI-anchored protein 39 (281 aa).

An N-terminal signal peptide occupies residues 1–18 (MKATTFTLLLSIATAINA). Disordered regions lie at residues 52–94 (HHHG…SASV) and 106–227 (VSVS…SSSE). Low complexity-rich tracts occupy residues 69–94 (SSSSVSESTVEELSTTTTTESVSASV), 106–158 (VSVS…STTD), 167–203 (ATDSVETTFESVSNTEDLSSSSSSIITDSSESTIEET), and 210–227 (SVPSSLSEEYSTSGSSSE). A glycan (N-linked (GlcNAc...) asparagine) is linked at N150. N-linked (GlcNAc...) asparagine glycans are attached at residues N239, N246, N249, and N252. S256 carries the GPI-anchor amidated serine lipid modification. A propeptide spans 257–281 (ANFAIQYGTDYGVAVVAAIVGALLI) (removed in mature form).

It is found in the cell membrane. In Candida albicans (strain SC5314 / ATCC MYA-2876) (Yeast), this protein is Predicted GPI-anchored protein 39 (PGA39).